The sequence spans 227 residues: 2,3-bisphosphoglycerate-dependent phosphoglycerate mutase (227 aa).

Substrate is bound by residues 7-14, 20-21, Arg59, 86-89, Lys97, 113-114, and 182-183; these read RHGFSEWN, TG, ERHY, RR, and GN. The Tele-phosphohistidine intermediate role is filled by His8. Glu86 (proton donor/acceptor) is an active-site residue.

Belongs to the phosphoglycerate mutase family. BPG-dependent PGAM subfamily. Homodimer.

The catalysed reaction is (2R)-2-phosphoglycerate = (2R)-3-phosphoglycerate. The protein operates within carbohydrate degradation; glycolysis; pyruvate from D-glyceraldehyde 3-phosphate: step 3/5. Its function is as follows. Catalyzes the interconversion of 2-phosphoglycerate and 3-phosphoglycerate. In Haemophilus influenzae (strain 86-028NP), this protein is 2,3-bisphosphoglycerate-dependent phosphoglycerate mutase.